The sequence spans 494 residues: Cytochrome P450 2A5 (494 aa).

S131 carries the post-translational modification Phosphoserine. K379 is modified (N6-acetyllysine). C439 contacts heme.

Belongs to the cytochrome P450 family. Requires heme as cofactor. Liver, with a strong circadian rhythmicity. Circadian expression is regulated by DBP.

It is found in the endoplasmic reticulum membrane. The protein localises to the microsome membrane. The enzyme catalyses an organic molecule + reduced [NADPH--hemoprotein reductase] + O2 = an alcohol + oxidized [NADPH--hemoprotein reductase] + H2O + H(+). In terms of biological role, exhibits a high coumarin 7-hydroxylase activity. This chain is Cytochrome P450 2A5 (Cyp2a5), found in Mus musculus (Mouse).